We begin with the raw amino-acid sequence, 992 residues long: MNYAKLSIAFSKKTIKTHNCRLFQRWLHVGDKVHDFRVVDTKKVPELQLNYTRLKHEPTNADMIHLDREDPNSVFSIGFQTPAENDEGIPHILEHTTLCGSNKYPVRDPFFKMLNRSLATFMNAFTASDFTFYPFATVNTTDYKNLRDVYLDATLFPKLRKLDFLQEGWRFEHADVNDKKSPIIFNGVVYNEMKGQVSDSSYIFYMLFQQHLFQGTAYGFNSGGDPLAIPDLKYEELVKFHRSHYHPSNAKILSYGSFPLEDNLSALSETFRPFSKRELNLPNTFLKEFDQEKRVVEYGPLDPVMAPGRQVKTSISFLANDTSNVYETFALKVLSKLCFDGFSSPFYKALIESGLGTDFAPNSGYDSTTKRGIFSVGLEGASEESLAKIENLVYSIFNDLALKGFENEKLEAILHQMEISLKHKSAHFGIGLAQSLPFNWFNGADPADWLSFNKQIEWLKQKNSDGKLFQKLIKKYILENKSRFVFTMLPSSTFPQRLQEAEAKKLQERTSKLTDEDIAEIEKTSVKLLEAQSTPADTSCLPTLSVSDIPETIDETKLKFLDIAGMKAQWYDLAAGLTYIRLLLPLKNFPESLIPYLPVYCDACLNLGTHSESIGDLEHQIRRYTGGISISPSAVTNNSDVSKYELGIAISGYALDKNVGKLVELINKAFWNTNLSNTDKLAIMLKTSVSGITDGIAEKGHSFAKVSSASGLTEKTSITEQLGGLTQVKLLSQLSREESFGPLVEKLTAIREILRGTSGFKAAINASPTQHEVVEKALQKFMKSRGVNQQTQTKSTSKERNGINSIKTYHELPFQTYFAAKSCLGVPYTHPDGAPLQILSSLLTHKYLHGEIREKGGAYGAGLSYSGIDGVLSFFTYRDSDPIRSLSVFDEASEWATTHEFSQRDIDEAKLAVFQGIDSPVSESQKGMLYFVDGVTDEMLQNRRKQLLNVSANDLKAVAKKYLVNPKKSYTAVLGPKSEKQLPTWVIDKFES.

The transit peptide at 1–30 directs the protein to the mitochondrion; the sequence is MNYAKLSIAFSKKTIKTHNCRLFQRWLHVG. His91 provides a ligand contact to Zn(2+). Glu94 serves as the catalytic Proton acceptor. A Zn(2+)-binding site is contributed by His95. Residue Glu167 is part of the active site. Zn(2+) is bound at residue Glu192.

It belongs to the peptidase M16 family. PreP subfamily. In terms of assembly, monomer and homodimer; homodimerization is induced by binding of the substrate. Zn(2+) serves as cofactor.

It localises to the mitochondrion intermembrane space. The protein localises to the mitochondrion matrix. Its function is as follows. Degrades mitochondrial transit peptides after their cleavage in the intermembrane space or in the matrix, and presequence peptides; clearance of these peptides is required to keep the presequence processing machinery running. Preferentially cleaves the N-terminal side of paired basic amino acid residues. Also degrades other unstructured peptides. May function as an ATP-dependent peptidase as opposed to a metalloendopeptidase. This is Presequence protease, mitochondrial (cym1) from Schizosaccharomyces pombe (strain 972 / ATCC 24843) (Fission yeast).